We begin with the raw amino-acid sequence, 388 residues long: tRNA (guanine-N(7)-)-methyltransferase non-catalytic subunit (388 aa).

WD repeat units follow at residues 58–102 (VEKR…KGDI), 112–151 (VVPKAPTAIVFDKEDAYVVVGDRAGDVHRFSVLNGSAIEM), 153–194 (GAIS…DSFF), and 196–234 (GHTEYVKTLAVQDNDSLWSSGGDKNLYNWSIAKCSAPRR). Positions 365–388 (EKKKRRLNEDINGDDGEGPGPSNS) are disordered.

The protein belongs to the WD repeat TRM82 family. As to quaternary structure, forms a heterodimer with the catalytic subunit.

The protein resides in the nucleus. It functions in the pathway tRNA modification; N(7)-methylguanine-tRNA biosynthesis. Required for the formation of N(7)-methylguanine at position 46 (m7G46) in tRNA. In the complex, it is required to stabilize and induce conformational changes of the catalytic subunit. This chain is tRNA (guanine-N(7)-)-methyltransferase non-catalytic subunit, found in Caenorhabditis elegans.